Here is a 399-residue protein sequence, read N- to C-terminus: Formaldehyde dismutase (399 aa).

Zn(2+) is bound at residue cysteine 46. Residue 47–51 (GSDQH) coordinates NAD(+). Zn(2+) is bound by residues histidine 67, cysteine 97, cysteine 100, cysteine 103, cysteine 111, and aspartate 170. Threonine 174 is a binding site for NAD(+). Histidine 177 serves as a coordination point for Zn(2+). Residues 197-198 (PV), 218-219 (DQ), arginine 223, valine 263, histidine 268, proline 299, 299-301 (PGI), and 336-338 (GMA) contribute to the NAD(+) site.

It belongs to the zinc-containing alcohol dehydrogenase family. As to quaternary structure, homotetramer. Requires Zn(2+) as cofactor. It depends on NAD(+) as a cofactor. The cofactor is NADH.

The enzyme catalyses 2 formaldehyde + H2O = methanol + formate + H(+). With respect to regulation, inhibited by the substrate analog pyrazole but not by NAD analogs such as AMP, ADP, ATP or N-methylnicotinamide chloride. Its function is as follows. Active against a range of primary alcohols as well as some secondary alcohols. Exhibits higher activity against alcohols with longer carbon chains. The chain is Formaldehyde dismutase from Pseudomonas putida (Arthrobacter siderocapsulatus).